The sequence spans 662 residues: 72 kDa type IV collagenase (662 aa).

The first 29 residues, Met-1–Ala-29, serve as a signal peptide directing secretion. Positions Ala-30–Asn-109 are cleaved as a propeptide — activation peptide. Residues Pro-100–Val-107 carry the Cysteine switch motif. A Zn(2+)-binding site is contributed by Cys-102. Residues Tyr-110–Val-221 form a collagenase-like 1 region. Residues Asp-134 and Asp-168 each contribute to the Ca(2+) site. Zn(2+)-binding residues include His-178 and Asp-180. Ca(2+)-binding residues include Asp-185 and Gly-186. His-193 is a binding site for Zn(2+). The Ca(2+) site is built by Gly-200, Gly-202, and Asp-204. A Zn(2+)-binding site is contributed by His-206. Ca(2+) contacts are provided by Asp-208, Asp-209, and Glu-211. Positions Arg-222–Ser-396 are collagen-binding. Fibronectin type-II domains follow at residues Ala-228–His-276, Ala-286–Glu-334, and Ser-344–Asp-392. 6 disulfides stabilise this stretch: Cys-233–Cys-259, Cys-247–Cys-274, Cys-291–Cys-317, Cys-305–Cys-332, Cys-349–Cys-375, and Cys-363–Cys-390. A collagenase-like 2 region spans residues Leu-397–Thr-467. His-403 is a binding site for Zn(2+). Glu-404 is a catalytic residue. Zn(2+) contacts are provided by His-407 and His-413. Residues Ser-414 to Cys-662 form a required for inhibitor TIMP2 binding region. The segment at Gly-446–Pro-465 is disordered. Cys-471 and Cys-662 are joined by a disulfide. Hemopexin repeat units follow at residues Asp-474–Leu-518, Pro-519–Pro-565, Val-567–Ile-615, and Pro-616–Cys-662. Residues Asp-478, Asp-523, and Asp-571 each contribute to the Ca(2+) site. The N-linked (GlcNAc...) asparagine glycan is linked to Asn-575. Ca(2+) is bound at residue Asp-620. An N-linked (GlcNAc...) asparagine glycan is attached at Asn-644.

It belongs to the peptidase M10A family. Interacts (via the C-terminal hemopexin-like domains-containing region) with the integrin alpha-V/beta-3; the interaction promotes vascular invasion in angiogenic vessels and melamoma cells. Interacts (via the C-terminal PEX domain) with TIMP2 (via the C-terminal); the interaction inhibits the degradation activity. Interacts with GSK3B. The cofactor is Ca(2+). Requires Zn(2+) as cofactor. In terms of processing, phosphorylation on multiple sites modulates enzymatic activity. Phosphorylated by PKC in vitro. Post-translationally, the propeptide is processed by MMP14 (MT-MMP1) and MMP16 (MT-MMP3). Autocatalytic cleavage in the C-terminal produces the anti-angiogenic peptide, PEX. This processing appears to be facilitated by binding integrinv/beta3.

It is found in the secreted. Its subcellular location is the extracellular space. The protein localises to the extracellular matrix. It localises to the membrane. The protein resides in the nucleus. It is found in the cytoplasm. Its subcellular location is the mitochondrion. It catalyses the reaction Cleavage of gelatin type I and collagen types IV, V, VII, X. Cleaves the collagen-like sequence Pro-Gln-Gly-|-Ile-Ala-Gly-Gln.. In terms of biological role, ubiquitinous metalloproteinase that is involved in diverse functions such as remodeling of the vasculature, angiogenesis, tissue repair, tumor invasion, inflammation, and atherosclerotic plaque rupture. As well as degrading extracellular matrix proteins, can also act on several nonmatrix proteins such as big endothelial 1 and beta-type CGRP promoting vasoconstriction. Also cleaves KISS at a Gly-|-Leu bond. Appears to have a role in myocardial cell death pathways. Contributes to myocardial oxidative stress by regulating the activity of GSK3beta. Cleaves GSK3beta in vitro. Involved in the formation of the fibrovascular tissues. Its function is as follows. PEX, the C-terminal non-catalytic fragment of MMP2, possesses anti-angiogenic and anti-tumor properties and inhibits cell migration and cell adhesion to FGF2 and vitronectin. Ligand for integrin alpha-v/beta-3 on the surface of blood vessels. Mediates the proteolysis of CHUK/IKKA and initiates a primary innate immune response by inducing mitochondrial-nuclear stress signaling with activation of the pro-inflammatory NF-kappaB, NFAT and IRF transcriptional pathways. This chain is 72 kDa type IV collagenase (Mmp2), found in Mus musculus (Mouse).